The chain runs to 189 residues: Isopentenyl-diphosphate Delta-isomerase (189 aa).

Mn(2+)-binding residues include His27 and His34. A Nudix hydrolase domain is found at 32–171 (PLHFAFSTYI…PFVFSPWLVD (140 aa)). The active site involves Cys69. Cys69 provides a ligand contact to Mg(2+). Residue His71 coordinates Mn(2+). Position 89 (Glu89) interacts with Mg(2+). The Mn(2+) site is built by Glu119 and Glu121. Residue Glu121 is part of the active site.

Belongs to the IPP isomerase type 1 family. Requires Mg(2+) as cofactor. Mn(2+) is required as a cofactor.

It localises to the cytoplasm. It carries out the reaction isopentenyl diphosphate = dimethylallyl diphosphate. Its pathway is isoprenoid biosynthesis; dimethylallyl diphosphate biosynthesis; dimethylallyl diphosphate from isopentenyl diphosphate: step 1/1. Functionally, catalyzes the 1,3-allylic rearrangement of the homoallylic substrate isopentenyl (IPP) to its highly electrophilic allylic isomer, dimethylallyl diphosphate (DMAPP). This chain is Isopentenyl-diphosphate Delta-isomerase, found in Corynebacterium glutamicum (strain ATCC 13032 / DSM 20300 / JCM 1318 / BCRC 11384 / CCUG 27702 / LMG 3730 / NBRC 12168 / NCIMB 10025 / NRRL B-2784 / 534).